A 238-amino-acid chain; its full sequence is Ribonuclease PH (238 aa).

A disordered region spans residues 67–87 (PRSTHTRSDREAARGKQSGRT). Phosphate is bound by residues arginine 86 and 124–126 (GTR).

The protein belongs to the RNase PH family. In terms of assembly, homohexameric ring arranged as a trimer of dimers.

It carries out the reaction tRNA(n+1) + phosphate = tRNA(n) + a ribonucleoside 5'-diphosphate. Functionally, phosphorolytic 3'-5' exoribonuclease that plays an important role in tRNA 3'-end maturation. Removes nucleotide residues following the 3'-CCA terminus of tRNAs; can also add nucleotides to the ends of RNA molecules by using nucleoside diphosphates as substrates, but this may not be physiologically important. Probably plays a role in initiation of 16S rRNA degradation (leading to ribosome degradation) during starvation. This is Ribonuclease PH from Ralstonia nicotianae (strain ATCC BAA-1114 / GMI1000) (Ralstonia solanacearum).